The sequence spans 357 residues: Protein XRP2 (357 aa).

A compositionally biased stretch (basic residues) spans 1 to 11 (MGCFFSKRRKP). The disordered stretch occupies residues 1 to 39 (MGCFFSKRRKPAQGGQQQGASQEPAAGEEKAPQYSWDQR). Residue G2 is the site of N-myristoyl glycine attachment. Residue C3 is the site of S-palmitoyl cysteine attachment. The segment covering 12–25 (AQGGQQQGASQEPA) has biased composition (low complexity). A C-CAP/cofactor C-like domain is found at 32 to 186 (PQYSWDQRAK…TWSNIHDFTP (155 aa)). Residues 105–106 (GS) and 122–125 (QQFR) contribute to the GTP site.

This sequence belongs to the TBCC family. In terms of processing, myristoylated on Gly-2; which may be required for membrane targeting. Palmitoylated on Cys-3; which may be required for plasma membrane targeting.

It localises to the cell membrane. Functionally, acts as a GTPase-activating protein (GAP) for tubulin in concert with tubulin-specific chaperone C, but does not enhance tubulin heterodimerization. Acts as a GTPase-activating protein. May act as guanine nucleotide dissociation inhibitor towards ADP-ribosylation factor-like proteins. The polypeptide is Protein XRP2 (RP2) (Gallus gallus (Chicken)).